The following is a 48-amino-acid chain: Large ribosomal subunit protein bL33B (48 aa).

The protein belongs to the bacterial ribosomal protein bL33 family.

This Streptococcus thermophilus (strain CNRZ 1066) protein is Large ribosomal subunit protein bL33B.